The chain runs to 295 residues: Elongation factor Ts (295 aa).

An involved in Mg(2+) ion dislocation from EF-Tu region spans residues Thr-79 to Val-82.

It belongs to the EF-Ts family.

The protein localises to the cytoplasm. Functionally, associates with the EF-Tu.GDP complex and induces the exchange of GDP to GTP. It remains bound to the aminoacyl-tRNA.EF-Tu.GTP complex up to the GTP hydrolysis stage on the ribosome. The chain is Elongation factor Ts from Mycoplasma capricolum subsp. capricolum (strain California kid / ATCC 27343 / NCTC 10154).